The following is a 403-amino-acid chain: JmjC domain-containing histone demethylation protein 1 (403 aa).

Residues 141 to 328 (WSLREWCNYF…QQLKIVDVEK (188 aa)) enclose the JmjC domain. Thr221 contacts substrate. The Fe cation site is built by His224 and Asp226. Position 241 (Lys241) interacts with substrate. A Fe cation-binding site is contributed by His296.

This sequence belongs to the JHDM1 histone demethylase family. The cofactor is Fe(2+).

Its subcellular location is the nucleus. It carries out the reaction N(6),N(6)-dimethyl-L-lysyl(36)-[histone H3] + 2 2-oxoglutarate + 2 O2 = L-lysyl(36)-[histone H3] + 2 formaldehyde + 2 succinate + 2 CO2. Its function is as follows. Histone demethylase that specifically demethylates 'Lys-36' of histone H3, thereby playing a central role in histone code. This Candida glabrata (strain ATCC 2001 / BCRC 20586 / JCM 3761 / NBRC 0622 / NRRL Y-65 / CBS 138) (Yeast) protein is JmjC domain-containing histone demethylation protein 1 (JHD1).